A 251-amino-acid chain; its full sequence is Ubiquinone/menaquinone biosynthesis C-methyltransferase UbiE (251 aa).

S-adenosyl-L-methionine contacts are provided by residues T74, D95, and 123 to 124 (NA).

The protein belongs to the class I-like SAM-binding methyltransferase superfamily. MenG/UbiE family.

The catalysed reaction is a 2-demethylmenaquinol + S-adenosyl-L-methionine = a menaquinol + S-adenosyl-L-homocysteine + H(+). It catalyses the reaction a 2-methoxy-6-(all-trans-polyprenyl)benzene-1,4-diol + S-adenosyl-L-methionine = a 5-methoxy-2-methyl-3-(all-trans-polyprenyl)benzene-1,4-diol + S-adenosyl-L-homocysteine + H(+). It participates in quinol/quinone metabolism; menaquinone biosynthesis; menaquinol from 1,4-dihydroxy-2-naphthoate: step 2/2. It functions in the pathway cofactor biosynthesis; ubiquinone biosynthesis. Functionally, methyltransferase required for the conversion of demethylmenaquinol (DMKH2) to menaquinol (MKH2) and the conversion of 2-polyprenyl-6-methoxy-1,4-benzoquinol (DDMQH2) to 2-polyprenyl-3-methyl-6-methoxy-1,4-benzoquinol (DMQH2). The polypeptide is Ubiquinone/menaquinone biosynthesis C-methyltransferase UbiE (Psychromonas ingrahamii (strain DSM 17664 / CCUG 51855 / 37)).